We begin with the raw amino-acid sequence, 185 residues long: UPF0200 protein TK1334 (185 aa).

7-14 (GMPGSGKS) serves as a coordination point for ATP.

Belongs to the UPF0200 family.

This is UPF0200 protein TK1334 from Thermococcus kodakarensis (strain ATCC BAA-918 / JCM 12380 / KOD1) (Pyrococcus kodakaraensis (strain KOD1)).